Here is a 116-residue protein sequence, read N- to C-terminus: Beta-2-microglobulin (116 aa).

The first 19 residues, 1–19, serve as a signal peptide directing secretion; that stretch reads MRAIITFALFCVLYVTVQG. The Ig-like C1-type domain maps to 24 to 110; the sequence is PKVQVYSHFP…VRHMNNKNIY (87 aa). Cysteines 44 and 99 form a disulfide.

This sequence belongs to the beta-2-microglobulin family. In terms of assembly, heterodimer of an alpha chain and a beta chain. Beta-2-microglobulin is the beta-chain of major histocompatibility complex class I molecules.

Its subcellular location is the secreted. Its function is as follows. Component of the class I major histocompatibility complex (MHC). Involved in the presentation of peptide antigens to the immune system. This chain is Beta-2-microglobulin (b2m), found in Cyprinus carpio (Common carp).